A 282-amino-acid polypeptide reads, in one-letter code: Heterogeneous nuclear ribonucleoprotein C (282 aa).

The region spanning S17–E88 is the RRM domain. Disordered regions lie at residues A131–G177 and Q208–S282. The short motif at P141–V147 is the Nuclear localization signal element. Over residues S161–S172 the composition is skewed to low complexity. Positions G177–D217 form a coiled coil. 2 stretches are compositionally biased toward basic and acidic residues: residues Q208–D217 and L224–E235. Composition is skewed to acidic residues over residues E236–L257 and K265–S282.

This sequence belongs to the RRM HNRPC family. RALY subfamily. Tetramer.

Its subcellular location is the nucleus. Binds pre-mRNA and nucleates the assembly of 40S hnRNP particles. Interacts with poly-U tracts in the 3'-UTR or 5'-UTR of mRNA and modulates the stability and the level of translation of bound mRNA molecules. Single HNRNPC tetramers bind 230-240 nucleotides. Trimers of HNRNPC tetramers bind 700 nucleotides. May play a role in the early steps of spliceosome assembly and pre-mRNA splicing. N6-methyladenosine (m6A) has been shown to alter the local structure in mRNAs and long non-coding RNAs (lncRNAs) via a mechanism named 'm(6)A-switch', facilitating binding of HNRNPC, leading to regulation of mRNA splicing. This chain is Heterogeneous nuclear ribonucleoprotein C (hnrnpc), found in Xenopus laevis (African clawed frog).